The primary structure comprises 109 residues: Cytochrome bo(3) ubiquinol oxidase subunit 4 (109 aa).

Residues 1–17 (MSHSTDHSGASHGSVKT) are Cytoplasmic-facing. The chain crosses the membrane as a helical span at residues 18–36 (YMTGFILSIILTVIPFWMV). The Periplasmic segment spans residues 37 to 45 (MTGAASPAV). A helical transmembrane segment spans residues 46-64 (ILGTILAMAVVQVLVHLVC). Topologically, residues 65-80 (FLHMNTKSDEGWNMTA) are cytoplasmic. The helical transmembrane segment at 81 to 99 (FVFTVLIIAILVVGSIWIM) threads the bilayer. At 100-109 (WNLNYNMMMH) the chain is on the periplasmic side.

The protein belongs to the cytochrome c oxidase bacterial subunit 4 family. As to quaternary structure, heterooctamer of two A chains, two B chains, two C chains and two D chains.

It localises to the cell inner membrane. Functionally, cytochrome bo(3) ubiquinol terminal oxidase is the component of the aerobic respiratory chain of E.coli that predominates when cells are grown at high aeration. Has proton pump activity across the membrane in addition to electron transfer, pumping 2 protons/electron. The protein is Cytochrome bo(3) ubiquinol oxidase subunit 4 (cyoD) of Escherichia coli O157:H7.